The primary structure comprises 322 residues: Acetyl-coenzyme A carboxylase carboxyl transferase subunit beta (322 aa).

Residues Leu24–Asp293 enclose the CoA carboxyltransferase N-terminal domain.

Belongs to the AccD/PCCB family. Acetyl-CoA carboxylase is a heterohexamer composed of biotin carboxyl carrier protein (AccB), biotin carboxylase (AccC) and two subunits each of ACCase subunit alpha (AccA) and ACCase subunit beta (AccD).

Its subcellular location is the cytoplasm. It catalyses the reaction N(6)-carboxybiotinyl-L-lysyl-[protein] + acetyl-CoA = N(6)-biotinyl-L-lysyl-[protein] + malonyl-CoA. The protein operates within lipid metabolism; malonyl-CoA biosynthesis; malonyl-CoA from acetyl-CoA: step 1/1. In terms of biological role, component of the acetyl coenzyme A carboxylase (ACC) complex. Biotin carboxylase (BC) catalyzes the carboxylation of biotin on its carrier protein (BCCP) and then the CO(2) group is transferred by the transcarboxylase to acetyl-CoA to form malonyl-CoA. The polypeptide is Acetyl-coenzyme A carboxylase carboxyl transferase subunit beta (Rhodopseudomonas palustris (strain BisB5)).